A 276-amino-acid chain; its full sequence is Exosome complex component Rrp42 (276 aa).

The protein belongs to the RNase PH family. Rrp42 subfamily. As to quaternary structure, component of the archaeal exosome complex. Forms a hexameric ring-like arrangement composed of 3 Rrp41-Rrp42 heterodimers. The hexameric ring associates with a trimer of Rrp4 and/or Csl4 subunits.

It is found in the cytoplasm. Functionally, non-catalytic component of the exosome, which is a complex involved in RNA degradation. Contributes to the structuring of the Rrp41 active site. This chain is Exosome complex component Rrp42, found in Aeropyrum pernix (strain ATCC 700893 / DSM 11879 / JCM 9820 / NBRC 100138 / K1).